Reading from the N-terminus, the 79-residue chain is MADAGARRPFFRRRKTCPFTGANAPKIDYKDSKLLMRYVSERGKIVPSRITAVSAKKQRELARAVKRARFLGLLPYVIR.

This sequence belongs to the bacterial ribosomal protein bS18 family. As to quaternary structure, part of the 30S ribosomal subunit. Forms a tight heterodimer with protein bS6.

Binds as a heterodimer with protein bS6 to the central domain of the 16S rRNA, where it helps stabilize the platform of the 30S subunit. The polypeptide is Small ribosomal subunit protein bS18 (Nitrobacter winogradskyi (strain ATCC 25391 / DSM 10237 / CIP 104748 / NCIMB 11846 / Nb-255)).